Reading from the N-terminus, the 383-residue chain is E3 ubiquitin-protein ligase SPL2 (383 aa).

Residues Met1–Asp14 are Cytoplasmic-facing. Residues Ile15 to Ser35 form a helical membrane-spanning segment. The Chloroplast intermembrane portion of the chain corresponds to Ala36–Asn269. Residues Phe270 to Ala290 form a helical membrane-spanning segment. Residues Val291–Ser383 are Cytoplasmic-facing. The RING-type zinc-finger motif lies at Cys331–Cys370.

The protein localises to the plastid. Its subcellular location is the chloroplast outer membrane. It catalyses the reaction S-ubiquitinyl-[E2 ubiquitin-conjugating enzyme]-L-cysteine + [acceptor protein]-L-lysine = [E2 ubiquitin-conjugating enzyme]-L-cysteine + N(6)-ubiquitinyl-[acceptor protein]-L-lysine.. The protein operates within protein modification; protein ubiquitination. Its function is as follows. Possesses E3 ubiquitin-protein ligase activity. This is E3 ubiquitin-protein ligase SPL2 from Arabidopsis thaliana (Mouse-ear cress).